The sequence spans 128 residues: Ribosome-binding factor A (128 aa).

This sequence belongs to the RbfA family. In terms of assembly, monomer. Binds 30S ribosomal subunits, but not 50S ribosomal subunits or 70S ribosomes.

The protein localises to the cytoplasm. Functionally, one of several proteins that assist in the late maturation steps of the functional core of the 30S ribosomal subunit. Associates with free 30S ribosomal subunits (but not with 30S subunits that are part of 70S ribosomes or polysomes). Required for efficient processing of 16S rRNA. May interact with the 5'-terminal helix region of 16S rRNA. In Saccharophagus degradans (strain 2-40 / ATCC 43961 / DSM 17024), this protein is Ribosome-binding factor A.